We begin with the raw amino-acid sequence, 94 residues long: uncharacterized protein (94 aa).

This is an uncharacterized protein from Helicobacter pylori (strain ATCC 700392 / 26695) (Campylobacter pylori).